A 312-amino-acid polypeptide reads, in one-letter code: Polyamine aminopropyltransferase (312 aa).

One can recognise a PABS domain in the interval phenylalanine 7–glutamine 247. Residue glutamine 36 participates in S-methyl-5'-thioadenosine binding. Histidine 67 and glutamate 95 together coordinate spermidine. S-methyl-5'-thioadenosine is bound by residues aspartate 115 and aspartate 147–alanine 148. Catalysis depends on aspartate 165, which acts as the Proton acceptor. Proline 174 contacts S-methyl-5'-thioadenosine.

The protein belongs to the spermidine/spermine synthase family. Homodimer or homotetramer.

It is found in the cytoplasm. The enzyme catalyses S-adenosyl 3-(methylsulfanyl)propylamine + putrescine = S-methyl-5'-thioadenosine + spermidine + H(+). The protein operates within amine and polyamine biosynthesis; spermidine biosynthesis; spermidine from putrescine: step 1/1. In terms of biological role, catalyzes the irreversible transfer of a propylamine group from the amino donor S-adenosylmethioninamine (decarboxy-AdoMet) to putrescine (1,4-diaminobutane) to yield spermidine. This Synechococcus sp. (strain JA-3-3Ab) (Cyanobacteria bacterium Yellowstone A-Prime) protein is Polyamine aminopropyltransferase.